The following is a 281-amino-acid chain: 3-mercaptopyruvate sulfurtransferase (281 aa).

Rhodanese domains lie at 17-135 (DDPE…LLEE) and 165-278 (HENT…LPVE). Residue arginine 179 coordinates substrate. The active-site Cysteine persulfide intermediate is cysteine 238. The segment at 238 to 244 (CGSGVTA) is substrate specificity.

Monomer.

It localises to the cytoplasm. It carries out the reaction 2-oxo-3-sulfanylpropanoate + [thioredoxin]-dithiol = [thioredoxin]-disulfide + hydrogen sulfide + pyruvate + H(+). In terms of biological role, catalyzes the transfer of sulfur from 3-mercaptopyruvate to a thiol-containing acceptor to form an intramolecular disulfide releasing hydrogen sulfide and pyruvate. May be involved in the enhancement of bacterial growth inhibition by serine. This is 3-mercaptopyruvate sulfurtransferase (sseA) from Escherichia coli (strain K12).